A 226-amino-acid chain; its full sequence is Cytidylate kinase (226 aa).

10–18 (GPAGAGKST) is a binding site for ATP.

It belongs to the cytidylate kinase family. Type 1 subfamily.

It localises to the cytoplasm. The catalysed reaction is CMP + ATP = CDP + ADP. The enzyme catalyses dCMP + ATP = dCDP + ADP. In Caldicellulosiruptor bescii (strain ATCC BAA-1888 / DSM 6725 / KCTC 15123 / Z-1320) (Anaerocellum thermophilum), this protein is Cytidylate kinase.